Here is a 350-residue protein sequence, read N- to C-terminus: Phosphotriesterase-related protein (350 aa).

A divalent metal cation is bound by residues histidine 22, histidine 24, glutamate 169, histidine 201, histidine 230, and aspartate 298.

The protein belongs to the metallo-dependent hydrolases superfamily. Phosphotriesterase family. The cofactor is a divalent metal cation.

This Drosophila erecta (Fruit fly) protein is Phosphotriesterase-related protein.